Consider the following 267-residue polypeptide: Phosphate import ATP-binding protein PstB 2 (267 aa).

In terms of domain architecture, ABC transporter spans 21–262 (LATKDLHVYY…AQCQSTNDYV (242 aa)). 53–60 (GPSGCGKS) serves as a coordination point for ATP.

This sequence belongs to the ABC transporter superfamily. Phosphate importer (TC 3.A.1.7) family. As to quaternary structure, the complex is composed of two ATP-binding proteins (PstB), two transmembrane proteins (PstC and PstA) and a solute-binding protein (PstS).

The protein resides in the cell membrane. It carries out the reaction phosphate(out) + ATP + H2O = ADP + 2 phosphate(in) + H(+). Functionally, part of the ABC transporter complex PstSACB involved in phosphate import. Responsible for energy coupling to the transport system. The chain is Phosphate import ATP-binding protein PstB 2 from Streptococcus pyogenes serotype M1.